Here is an 89-residue protein sequence, read N- to C-terminus: Small ribosomal subunit protein uS15 (89 aa).

It belongs to the universal ribosomal protein uS15 family. Part of the 30S ribosomal subunit. Forms a bridge to the 50S subunit in the 70S ribosome, contacting the 23S rRNA.

In terms of biological role, one of the primary rRNA binding proteins, it binds directly to 16S rRNA where it helps nucleate assembly of the platform of the 30S subunit by binding and bridging several RNA helices of the 16S rRNA. Forms an intersubunit bridge (bridge B4) with the 23S rRNA of the 50S subunit in the ribosome. The sequence is that of Small ribosomal subunit protein uS15 from Staphylococcus carnosus (strain TM300).